Reading from the N-terminus, the 204-residue chain is ATP-dependent Clp protease proteolytic subunit (204 aa).

The active-site Nucleophile is Ser-101. Residue His-126 is part of the active site.

Belongs to the peptidase S14 family. In terms of assembly, component of the chloroplastic Clp protease core complex.

The protein resides in the plastid. Its subcellular location is the chloroplast stroma. It catalyses the reaction Hydrolysis of proteins to small peptides in the presence of ATP and magnesium. alpha-casein is the usual test substrate. In the absence of ATP, only oligopeptides shorter than five residues are hydrolyzed (such as succinyl-Leu-Tyr-|-NHMec, and Leu-Tyr-Leu-|-Tyr-Trp, in which cleavage of the -Tyr-|-Leu- and -Tyr-|-Trp bonds also occurs).. Cleaves peptides in various proteins in a process that requires ATP hydrolysis. Has a chymotrypsin-like activity. Plays a major role in the degradation of misfolded proteins. This chain is ATP-dependent Clp protease proteolytic subunit, found in Anthoceros angustus (Hornwort).